The chain runs to 379 residues: Putative 2-hydroxyacid dehydrogenase YGL185C (379 aa).

Residues 207-208, 291-293, and aspartate 317 each bind NAD(+); these read SI and LGR. Residue arginine 293 is part of the active site. Residue glutamate 322 is part of the active site. Residue histidine 341 is the Proton donor of the active site. 341–344 is an NAD(+) binding site; it reads HLGS.

This sequence belongs to the D-isomer specific 2-hydroxyacid dehydrogenase family.

In Saccharomyces cerevisiae (strain ATCC 204508 / S288c) (Baker's yeast), this protein is Putative 2-hydroxyacid dehydrogenase YGL185C.